We begin with the raw amino-acid sequence, 233 residues long: Gamma-glutamyl-hercynylcysteine sulfoxide hydrolase (233 aa).

Cys-2 acts as the Nucleophile in catalysis. A Glutamine amidotransferase type-2 domain is found at 2-233; that stretch reads CRHLGWLGAQ…TALDRAKGPR (232 aa).

It catalyses the reaction gamma-L-glutamyl-hercynylcysteine S-oxide + H2O = S-(hercyn-2-yl)-L-cysteine S-oxide + L-glutamate. The protein operates within amino-acid biosynthesis; ergothioneine biosynthesis. Catalyzes the hydrolysis of the gamma-glutamyl amide bond of hercynyl-gamma-L-glutamyl-L-cysteine sulfoxide to produce hercynylcysteine sulfoxide, a step in the biosynthesis pathway of ergothioneine. Ergothioneine is an antioxidant that protects mycobacteria from oxidative stress. The chain is Gamma-glutamyl-hercynylcysteine sulfoxide hydrolase (egtC) from Mycobacterium tuberculosis (strain ATCC 25618 / H37Rv).